We begin with the raw amino-acid sequence, 378 residues long: Histone deacetylase 8 (378 aa).

The interval R15–G325 is histone deacetylase. Position 102 (D102) interacts with substrate. The active-site Proton acceptor is the H144. G152 lines the substrate pocket. The a divalent metal cation site is built by D179, H181, and D268. Y307 contacts substrate.

This sequence belongs to the histone deacetylase family. HD type 1 subfamily. A divalent metal cation serves as cofactor.

It is found in the nucleus. Its subcellular location is the chromosome. The protein resides in the cytoplasm. The enzyme catalyses N(6)-acetyl-L-lysyl-[histone] + H2O = L-lysyl-[histone] + acetate. It carries out the reaction N(6)-acetyl-L-lysyl-[protein] + H2O = L-lysyl-[protein] + acetate. The catalysed reaction is N(6)-(2E)-butenoyl-L-lysyl-[protein] + H2O = (2E)-2-butenoate + L-lysyl-[protein]. Its activity is regulated as follows. Its activity is inhibited by trichostatin A (TSA) and butyrate, 2 well known histone deacetylase inhibitors. Histone deacetylase that catalyzes the deacetylation of lysine residues on the N-terminal part of the core histones (H2A, H2B, H3 and H4). Histone deacetylation gives a tag for epigenetic repression and plays an important role in transcriptional regulation, cell cycle progression and developmental events. Histone deacetylases act via the formation of large multiprotein complexes. Also involved in the deacetylation of non-histone proteins. In addition to protein deacetylase activity, also has protein-lysine deacylase activity: acts as a protein decrotonylase by mediating decrotonylation ((2E)-butenoyl) of histones. The polypeptide is Histone deacetylase 8 (hdac8) (Danio rerio (Zebrafish)).